We begin with the raw amino-acid sequence, 488 residues long: Poly(3-hydroxybutyrate) depolymerase (488 aa).

Positions 1 to 27 (MVRRLWRRIAGWLAACVAILCAFPLHA) are cleaved as a signal peptide. Residue serine 166 is the Charge relay system of the active site. In terms of domain architecture, Fibronectin type-III spans 346-428 (APTGLAVTAT…AAVSATTKSA (83 aa)).

It belongs to the AB hydrolase superfamily. Lipase family.

It localises to the secreted. It catalyses the reaction [(3R)-hydroxybutanoate](n) + H2O = [(3R)-hydroxybutanoate](n-2) + (3R)-hydroxybutanoate dimer + H(+). The enzyme catalyses [(3R)-hydroxybutanoate](n) + H2O = [(3R)-hydroxybutanoate](n-3) + (3R)-hydroxybutanoate trimer + H(+). It carries out the reaction [(3R)-hydroxybutanoate](n) + H2O = [(3R)-hydroxybutanoate](n-1) + (R)-3-hydroxybutanoate + H(+). The catalysed reaction is [(3R)-hydroxybutanoate](n) + H2O = [(3R)-hydroxybutanoate](n-5) + (3R)-hydroxybutanoate pentamer + H(+). It catalyses the reaction [(3R)-hydroxybutanoate](n) + H2O = [(3R)-hydroxybutanoate](n-4) + (3R)-hydroxybutanoate tetramer + H(+). This protein degrades water-insoluble and water-soluble PHB to monomeric D(-)-3-hydroxybutyrate. The protein is Poly(3-hydroxybutyrate) depolymerase of Ralstonia pickettii (Burkholderia pickettii).